A 317-amino-acid polypeptide reads, in one-letter code: MKHELSSMKAFVILAESSSFNNAAKLLNITQPALTRRIKKMEEDLHVQLFERTTRKVTLTKAGKRLLPEARELIKKFDETLFNIRDMNAYHRGMVTLACIPTAVFYFLPLAIGKFNELYPNIKVRILEQGTNNCMESVLCNESDFGINMNNVTNSSIDFTPLVNEPFVLACRRDHPLAKKQLVEWQELVGYKMIGVRSSSGNRLLIEQQLADKPWKLDWFYEVRHLSTSLGLVEAGLGISALPGLAMPHAPYSSIIGIPLVEPVIRRTLGIIRRKDAVLSPAAERFFALLINLWTDDKDNLWTNIVERQRHALQEIG.

The region spanning 1–60 (MKHELSSMKAFVILAESSSFNNAAKLLNITQPALTRRIKKMEEDLHVQLFERTTRKVTLT) is the HTH lysR-type domain. The H-T-H motif DNA-binding region spans 20-40 (FNNAAKLLNITQPALTRRIKK).

It belongs to the LysR transcriptional regulatory family.

This is an uncharacterized protein from Escherichia coli (strain K12).